The chain runs to 551 residues: MIRMIKGQIYFTSKYPNIIIPEKPIPHLILKHIRSKPDQVLLVDGLTFKEYSSHFVADTIEKVACGLNKLNIKKGDVLGVILPNLPEYVPIFHGTLLMGGITSLVNPDYTIEELSHTLATVSPRYLAVTLAVYEKIKNDLKRVFPSVEKVILVDIAGQTLKEIGQLTLSSDGIVMSFNQLINNNGKDYPIVRIDLKKDTAIIPFSSGTTGLFKGVCLSHHNLVSNTHQTQTVETTNYKKNDTVMGQLPFFHIYGLMTYLILMVKQGHCVVILPKFEFVRFLDLIQKYKVAISFIVPPIAIMFAKSPIVDKFDLSSLRTLFSGAAPLSREVEDLIKERFKGKLIIKQGYGATELSPACFVIPSGLIKSGSAGILLPNQLVKIISPETGENLGMGEKGEICIKGPNVMLGYYNNEKATNEVIDKDGFFKTGDIGYVDEDGYYFIVDRSKELIKCKGFQVPPAELEALLLSHPKVADACVVGLSKGDMGEVPRGFVVIKQNESLTEKELLDWAHPKIANYKHFRGGIFFIPAIPKSATGKLLRKNLKDINPPKL.

ATP contacts are provided by Ser205, Ser206, Gly207, Thr208, Thr209, and Lys213. Tyr253 and Thr257 together coordinate (E)-4-coumaroyl-AMP. CoA is bound at residue Lys274. The SBD1 stretch occupies residues 276–346; the sequence is EFVRFLDLIQ…RFKGKLIIKQ (71 aa). (E)-4-coumaroyl-AMP-binding residues include Ala323, Gln346, Gly347, and Thr351. The ATP site is built by Gln346, Gly347, Thr351, Asp430, and Arg445. Residues 347-409 are SBD2; the sequence is GYGATELSPA…IKGPNVMLGY (63 aa). Lys447 and Lys451 together coordinate (E)-4-coumaroyl-AMP. CoA contacts are provided by Lys453 and Gly454. Lys537 contributes to the ATP binding site.

It belongs to the ATP-dependent AMP-binding enzyme family. Requires Mg(2+) as cofactor.

It carries out the reaction (E)-4-coumarate + ATP + CoA = (E)-4-coumaroyl-CoA + AMP + diphosphate. The enzyme catalyses (E)-4-coumarate + ATP + H(+) = (E)-4-coumaroyl-AMP + diphosphate. It catalyses the reaction (E)-4-coumaroyl-AMP + CoA = (E)-4-coumaroyl-CoA + AMP + H(+). Its pathway is phytoalexin biosynthesis; 3,4',5-trihydroxystilbene biosynthesis; 3,4',5-trihydroxystilbene from trans-4-coumarate: step 1/2. Carboxylate--CoA ligase that may use 4-coumarate as substrate. Follows a two-step reaction mechanism, wherein the carboxylate substrate first undergoes adenylation by ATP, followed by a thioesterification in the presence of CoA to yield the final CoA thioester. The sequence is that of Probable 4-coumarate--CoA ligase 2 (4cl2) from Dictyostelium discoideum (Social amoeba).